The sequence spans 30 residues: 80 kDa carcinoembryonic antigen-binding protein (30 aa).

As to quaternary structure, binds to carcinoembryonic antigen (CEA). Post-translationally, the N-terminus is blocked.

Its subcellular location is the cell membrane. In terms of biological role, may play a role in the development of hepatic metastases from colorectal cancers. The sequence is that of 80 kDa carcinoembryonic antigen-binding protein from Rattus norvegicus (Rat).